The primary structure comprises 351 residues: 3-dehydroquinate synthase (351 aa).

Residues 60-65 (DGEEYK), 94-98 (GVISD), 118-119 (TT), lysine 131, lysine 140, and 158-161 (FLKT) each bind NAD(+). The Zn(2+) site is built by glutamate 173, histidine 239, and histidine 256.

It belongs to the sugar phosphate cyclases superfamily. Dehydroquinate synthase family. NAD(+) is required as a cofactor. The cofactor is Co(2+). It depends on Zn(2+) as a cofactor.

The protein resides in the cytoplasm. It carries out the reaction 7-phospho-2-dehydro-3-deoxy-D-arabino-heptonate = 3-dehydroquinate + phosphate. It participates in metabolic intermediate biosynthesis; chorismate biosynthesis; chorismate from D-erythrose 4-phosphate and phosphoenolpyruvate: step 2/7. Functionally, catalyzes the conversion of 3-deoxy-D-arabino-heptulosonate 7-phosphate (DAHP) to dehydroquinate (DHQ). This is 3-dehydroquinate synthase from Campylobacter jejuni subsp. jejuni serotype O:2 (strain ATCC 700819 / NCTC 11168).